Consider the following 268-residue polypeptide: Trans-aconitate 2-methyltransferase (268 aa).

This sequence belongs to the methyltransferase superfamily. Tam family.

It localises to the cytoplasm. It catalyses the reaction trans-aconitate + S-adenosyl-L-methionine = (E)-3-(methoxycarbonyl)pent-2-enedioate + S-adenosyl-L-homocysteine. In terms of biological role, catalyzes the S-adenosylmethionine monomethyl esterification of trans-aconitate. This chain is Trans-aconitate 2-methyltransferase, found in Delftia acidovorans (strain DSM 14801 / SPH-1).